A 329-amino-acid polypeptide reads, in one-letter code: MCASVFFIIIYMFYIHYSHKSVLLNEAIQSLNIKATGMYIDGTFGSGGHSKLILSQLNKRGRLLAIDKDLLAVKIGKHIAEQDDRFTIIHSSFSKMINHVKNIGLIGSVDGILLDLGISTFQINDCSRGFSFMQDGLLDMRMDISSGISAAEWLSKASQENITWVLKNFGEERFAKNIAKILVSKRRYTPIIRSIVLSKLICDAIPHRNMNKHPATKSFLAIRMFINNELEEIMQVLKDALIILSPRGRLVVISFNSLEDRLVKYFIREHSCALSIPPKLPLTNNQIFSKYKNKCQLKNIGKLTPSKQEIKRNIRARSAILRCAEKLAI.

S-adenosyl-L-methionine is bound by residues 47–49, Asp67, Phe93, Asp115, and Gln122; that span reads GGH.

This sequence belongs to the methyltransferase superfamily. RsmH family.

It is found in the cytoplasm. It carries out the reaction cytidine(1402) in 16S rRNA + S-adenosyl-L-methionine = N(4)-methylcytidine(1402) in 16S rRNA + S-adenosyl-L-homocysteine + H(+). Its function is as follows. Specifically methylates the N4 position of cytidine in position 1402 (C1402) of 16S rRNA. The chain is Ribosomal RNA small subunit methyltransferase H from Blochmanniella pennsylvanica (strain BPEN).